The chain runs to 270 residues: Monocyte to macrophage differentiation factor 2 (270 aa).

Over 1–38 (MFAPRLLDFQKTKYARFMNHRVPAHKRYQPTEYEHAAN) the chain is Cytoplasmic. A helical membrane pass occupies residues 39-59 (CATHAFWIIPSILGSSNLYFL). Residues 60-65 (SDDDWE) are Lumenal-facing. Residues 66–86 (TISAWIYGLGLCGLFVVSTVF) traverse the membrane as a helical segment. At 87 to 102 (HTISWKKSHLRMVEHC) the chain is on the cytoplasmic side. A helical transmembrane segment spans residues 103 to 123 (LHMFDRMVIYFFIAASYAPWL). Residues 124–132 (NLRELGPWA) are Lumenal-facing. A helical membrane pass occupies residues 133–153 (SHMRWLVWIMASVGTIYVFFF). The Cytoplasmic segment spans residues 154–182 (HERTGSCVQFLRGEACPKAGTACLPARYK). A helical transmembrane segment spans residues 183-203 (LVELLCYVVMGFFPALVILSM). The Lumenal segment spans residues 204–205 (PN). A helical transmembrane segment spans residues 206 to 226 (TEGIWELVTGGVFYCLGMVFF). Residues 227–233 (KSDGRIP) are Cytoplasmic-facing. Residues 234–254 (FAHAIWHLFVAFGAGTHYYAI) form a helical membrane-spanning segment. At 255–270 (WRYLYLPSTLQTKVSK) the chain is on the lumenal side.

It belongs to the ADIPOR family. As to expression, shows restricted expression with highest levels in brain and testis.

It localises to the golgi apparatus membrane. This chain is Monocyte to macrophage differentiation factor 2, found in Homo sapiens (Human).